Consider the following 57-residue polypeptide: MSEELQPNQTPVQEDPKFGFNNYAEKLNGRAAMVGFLLILVIEYFTNQGVLAWLGLR.

Residues 25–30 (EKLNGR) carry the Chlorophyll-binding motif motif. A helical transmembrane segment spans residues 25 to 46 (EKLNGRAAMVGFLLILVIEYFT).

The protein belongs to the Hlip family. In terms of assembly, probably forms dimers which bind 6 chlorophyll a and 2 beta-carotenoid molecules. Cofractionates in an approximately 50 kDa fraction of the thylakoid membrane with HliC. Does not associate with mature PSII. Purified in several chlorophyll- and carotenoid-containing complexes, including photosystem II (PSII) assembly intermediate complex RCII* (iD1, D1, D2, PsbE, PsbF, PsbI, Ycf39, Ycf48, HliC and HliD) and the Ycf39-Hlip complex (Ycf39, HliC, HliD and pigments).

It is found in the cellular thylakoid membrane. Functionally, involved in photosystem II (PSII) assembly and/or repair under high light stress. Required for binding of chlorophyll and carotenoids by the Ycf39-Hlip complex. The Ycf39-Hlip complex binds D1 at an early stage of PSII assembly along with Ycf48, ribosomes and ChlG, the last enzyme in chlorophyll biosynthesis; it may be involved in chlorophyll reuse and delivery to D1 in the initial stages of PSII assembly. Binds chlorophyll a and beta-carotenoid in a 3:1 stoichiometry in the presence and absence of Yfc39; in the Ycf39-HliC-HliD complex, HliD binds all the pigment. The Ycf39-Hlip complex efficiently quenches chlorophyll fluorescence, contributing to photoprotection. Deletion of 4 to 5 members of the Hlip family suggests the proteins are involved in regulation of chlorophyll biosynthesis, in stabilization of chlorophyll-binding proteins and/or in reuse of chlorophylls, and may regulate tetrapyrrole biosynthesis. Might bind chlorophyll and/or carotenoids in association with HliC (called the ScpBE pair). The Hlips might regulate tetrapyrrole biosynthesis, maybe at the level of aminolevulinic acid synthesis and probably stabilize PSII assembly intermediates. This chain is High light-inducible protein HliD (hliD), found in Synechocystis sp. (strain ATCC 27184 / PCC 6803 / Kazusa).